We begin with the raw amino-acid sequence, 262 residues long: tRNA pseudouridine synthase A (262 aa).

Aspartate 52 functions as the Nucleophile in the catalytic mechanism. Tyrosine 103 is a binding site for substrate.

It belongs to the tRNA pseudouridine synthase TruA family.

The enzyme catalyses uridine(38/39/40) in tRNA = pseudouridine(38/39/40) in tRNA. In terms of biological role, formation of pseudouridine at positions 38, 39 and 40 in the anticodon stem and loop of transfer RNAs. The polypeptide is tRNA pseudouridine synthase A (Methanococcus maripaludis (strain DSM 14266 / JCM 13030 / NBRC 101832 / S2 / LL)).